Consider the following 239-residue polypeptide: 7-cyano-7-deazaguanine synthase (239 aa).

8-18 is a binding site for ATP; the sequence is FSGGLDSTASL. Residues cysteine 194, cysteine 209, cysteine 212, and cysteine 215 each coordinate Zn(2+).

It belongs to the QueC family.

It carries out the reaction 7-carboxy-7-deazaguanine + NH4(+) + ATP = 7-cyano-7-deazaguanine + ADP + phosphate + H2O + H(+). It functions in the pathway purine metabolism; 7-cyano-7-deazaguanine biosynthesis. In terms of biological role, catalyzes the ATP-dependent conversion of 7-carboxy-7-deazaguanine (CDG) to 7-cyano-7-deazaguanine (preQ(0)). The polypeptide is 7-cyano-7-deazaguanine synthase (Pyrococcus abyssi (strain GE5 / Orsay)).